The following is a 203-amino-acid chain: Large ribosomal subunit protein bL25 (203 aa).

The protein belongs to the bacterial ribosomal protein bL25 family. CTC subfamily. As to quaternary structure, part of the 50S ribosomal subunit; part of the 5S rRNA/L5/L18/L25 subcomplex. Contacts the 5S rRNA. Binds to the 5S rRNA independently of L5 and L18.

In terms of biological role, this is one of the proteins that binds to the 5S RNA in the ribosome where it forms part of the central protuberance. This is Large ribosomal subunit protein bL25 from Cupriavidus metallidurans (strain ATCC 43123 / DSM 2839 / NBRC 102507 / CH34) (Ralstonia metallidurans).